We begin with the raw amino-acid sequence, 92 residues long: Kinetoplastid membrane protein 11C (92 aa).

It belongs to the KMP-11 family. As to quaternary structure, monomer.

Its subcellular location is the cytoplasm. The protein localises to the cytoskeleton. The protein resides in the cell projection. It localises to the cilium. It is found in the flagellum. Its function is as follows. May be involved in the regulation of the cytoskeleton through interaction with the subpellicular microtubules. May be involved in parasite mobility and attachment to the surface of the host cell. Behaves as a strong immunogen during infection. This Leishmania infantum protein is Kinetoplastid membrane protein 11C (KMP-11C).